The chain runs to 206 residues: Holliday junction branch migration complex subunit RuvA (206 aa).

Positions M1 to N64 are domain I. Positions T65–P143 are domain II. The interval Y144–A157 is flexible linker. The tract at residues P158–L206 is domain III.

This sequence belongs to the RuvA family. Homotetramer. Forms an RuvA(8)-RuvB(12)-Holliday junction (HJ) complex. HJ DNA is sandwiched between 2 RuvA tetramers; dsDNA enters through RuvA and exits via RuvB. An RuvB hexamer assembles on each DNA strand where it exits the tetramer. Each RuvB hexamer is contacted by two RuvA subunits (via domain III) on 2 adjacent RuvB subunits; this complex drives branch migration. In the full resolvosome a probable DNA-RuvA(4)-RuvB(12)-RuvC(2) complex forms which resolves the HJ.

It localises to the cytoplasm. In terms of biological role, the RuvA-RuvB-RuvC complex processes Holliday junction (HJ) DNA during genetic recombination and DNA repair, while the RuvA-RuvB complex plays an important role in the rescue of blocked DNA replication forks via replication fork reversal (RFR). RuvA specifically binds to HJ cruciform DNA, conferring on it an open structure. The RuvB hexamer acts as an ATP-dependent pump, pulling dsDNA into and through the RuvAB complex. HJ branch migration allows RuvC to scan DNA until it finds its consensus sequence, where it cleaves and resolves the cruciform DNA. In Tolumonas auensis (strain DSM 9187 / NBRC 110442 / TA 4), this protein is Holliday junction branch migration complex subunit RuvA.